A 315-amino-acid chain; its full sequence is Probable HTH-type transcriptional regulator SinR (315 aa).

The region spanning 8–65 (RGMRDWMIFIKVAEVGNLSRAARELDISISAVSKSLSRLENSIEVTLLRRDSHHLELT) is the HTH lysR-type domain. Positions 25-44 (LSRAARELDISISAVSKSLS) form a DNA-binding region, H-T-H motif.

This sequence belongs to the LysR transcriptional regulatory family.

Functionally, probable regulatory protein. Its target is not known. The protein is Probable HTH-type transcriptional regulator SinR (sinR) of Salmonella typhimurium (strain LT2 / SGSC1412 / ATCC 700720).